We begin with the raw amino-acid sequence, 295 residues long: Indole-3-glycerol phosphate synthase (295 aa).

It belongs to the TrpC family.

The catalysed reaction is 1-(2-carboxyphenylamino)-1-deoxy-D-ribulose 5-phosphate + H(+) = (1S,2R)-1-C-(indol-3-yl)glycerol 3-phosphate + CO2 + H2O. The protein operates within amino-acid biosynthesis; L-tryptophan biosynthesis; L-tryptophan from chorismate: step 4/5. The chain is Indole-3-glycerol phosphate synthase from Prochlorococcus marinus subsp. pastoris (strain CCMP1986 / NIES-2087 / MED4).